The following is a 120-amino-acid chain: Large ribosomal subunit protein uL18 (120 aa).

It belongs to the universal ribosomal protein uL18 family. In terms of assembly, part of the 50S ribosomal subunit; part of the 5S rRNA/L5/L18/L25 subcomplex. Contacts the 5S and 23S rRNAs.

In terms of biological role, this is one of the proteins that bind and probably mediate the attachment of the 5S RNA into the large ribosomal subunit, where it forms part of the central protuberance. In Clostridium botulinum (strain Eklund 17B / Type B), this protein is Large ribosomal subunit protein uL18.